The following is a 128-amino-acid chain: Sirohydrochlorin cobaltochelatase (128 aa).

The active-site Proton acceptor is His-9. His-9 is a binding site for Co(2+). Substrate-binding positions include Lys-43 and 68-73; that span reads FATGTH. His-73 lines the Co(2+) pocket.

This sequence belongs to the CbiX family. CbiXS subfamily. As to quaternary structure, homotetramer; dimer of dimers.

The catalysed reaction is Co-sirohydrochlorin + 2 H(+) = sirohydrochlorin + Co(2+). The protein operates within cofactor biosynthesis; adenosylcobalamin biosynthesis; cob(II)yrinate a,c-diamide from sirohydrochlorin (anaerobic route): step 1/10. Functionally, catalyzes the insertion of Co(2+) into sirohydrochlorin as part of the anaerobic pathway to cobalamin biosynthesis. The chain is Sirohydrochlorin cobaltochelatase from Saccharolobus islandicus (strain Y.G.57.14 / Yellowstone #1) (Sulfolobus islandicus).